The following is a 98-amino-acid chain: NADH-ubiquinone oxidoreductase chain 4L (98 aa).

The next 3 membrane-spanning stretches (helical) occupy residues 2-22 (SPAV…TLMF), 26-46 (LMST…LATI), and 59-79 (IPIA…ALLA).

Belongs to the complex I subunit 4L family. As to quaternary structure, core subunit of respiratory chain NADH dehydrogenase (Complex I) which is composed of 45 different subunits.

The protein resides in the mitochondrion inner membrane. It catalyses the reaction a ubiquinone + NADH + 5 H(+)(in) = a ubiquinol + NAD(+) + 4 H(+)(out). Its function is as follows. Core subunit of the mitochondrial membrane respiratory chain NADH dehydrogenase (Complex I) which catalyzes electron transfer from NADH through the respiratory chain, using ubiquinone as an electron acceptor. Part of the enzyme membrane arm which is embedded in the lipid bilayer and involved in proton translocation. The sequence is that of NADH-ubiquinone oxidoreductase chain 4L (MT-ND4L) from Alexandromys kikuchii (Taiwan vole).